Here is a 331-residue protein sequence, read N- to C-terminus: Biotin synthase (331 aa).

The 230-residue stretch at 52 to 281 (FFQNKVKLNM…TKEIRVSGGR (230 aa)) folds into the Radical SAM core domain. Cys70, Cys74, and Cys77 together coordinate [4Fe-4S] cluster. [2Fe-2S] cluster is bound by residues Cys114, Cys146, Cys206, and Arg276.

It belongs to the radical SAM superfamily. Biotin synthase family. Homodimer. [4Fe-4S] cluster serves as cofactor. It depends on [2Fe-2S] cluster as a cofactor.

It catalyses the reaction (4R,5S)-dethiobiotin + (sulfur carrier)-SH + 2 reduced [2Fe-2S]-[ferredoxin] + 2 S-adenosyl-L-methionine = (sulfur carrier)-H + biotin + 2 5'-deoxyadenosine + 2 L-methionine + 2 oxidized [2Fe-2S]-[ferredoxin]. The protein operates within cofactor biosynthesis; biotin biosynthesis; biotin from 7,8-diaminononanoate: step 2/2. In terms of biological role, catalyzes the conversion of dethiobiotin (DTB) to biotin by the insertion of a sulfur atom into dethiobiotin via a radical-based mechanism. The protein is Biotin synthase of Bacillus pumilus (strain SAFR-032).